Consider the following 430-residue polypeptide: Phosphoribosylamine--glycine ligase (430 aa).

Residues 109-316 (KDFMARHGIP…LLDLIEAALN (208 aa)) form the ATP-grasp domain. 135–196 (VRQQGAPIVI…EEYLDGEEAS (62 aa)) serves as a coordination point for ATP. 2 residues coordinate Mg(2+): Glu-286 and Asn-288.

Belongs to the GARS family. It depends on Mg(2+) as a cofactor. Mn(2+) is required as a cofactor.

It carries out the reaction 5-phospho-beta-D-ribosylamine + glycine + ATP = N(1)-(5-phospho-beta-D-ribosyl)glycinamide + ADP + phosphate + H(+). The protein operates within purine metabolism; IMP biosynthesis via de novo pathway; N(1)-(5-phospho-D-ribosyl)glycinamide from 5-phospho-alpha-D-ribose 1-diphosphate: step 2/2. This Xylella fastidiosa (strain Temecula1 / ATCC 700964) protein is Phosphoribosylamine--glycine ligase.